Consider the following 311-residue polypeptide: Probable cell division protein WhiA (311 aa).

A DNA-binding region (H-T-H motif) is located at residues 277–311; the sequence is TLKEVADQIPDGPISKSGVNHRFKKLHELAETLKE.

The protein belongs to the WhiA family.

Involved in cell division and chromosome segregation. This Lactobacillus helveticus (strain DPC 4571) protein is Probable cell division protein WhiA.